The sequence spans 504 residues: L-amino-acid oxidase (504 aa).

The N-terminal stretch at methionine 1–cysteine 18 is a signal peptide. Cysteine 28 and cysteine 191 form a disulfide bridge. Residues methionine 61–serine 62, glutamate 81–alanine 82, arginine 89, and glycine 105–arginine 108 contribute to the FAD site. Substrate is bound at residue arginine 108. An N-linked (GlcNAc...) asparagine glycan is attached at asparagine 190. A substrate-binding site is contributed by histidine 241. Valine 279 contributes to the FAD binding site. Cysteine 349 and cysteine 430 are oxidised to a cystine. Residue asparagine 379 is glycosylated (N-linked (GlcNAc...) asparagine). Tyrosine 390 is a substrate binding site. Residues glutamate 475 and glycine 482–threonine 487 each bind FAD. Glycine 482–tryptophan 483 provides a ligand contact to substrate.

Belongs to the flavin monoamine oxidase family. FIG1 subfamily. As to quaternary structure, homodimer; non-covalently linked. Requires FAD as cofactor. In terms of tissue distribution, expressed by the venom gland.

The protein localises to the secreted. It carries out the reaction an L-alpha-amino acid + O2 + H2O = a 2-oxocarboxylate + H2O2 + NH4(+). The enzyme catalyses L-leucine + O2 + H2O = 4-methyl-2-oxopentanoate + H2O2 + NH4(+). It catalyses the reaction L-phenylalanine + O2 + H2O = 3-phenylpyruvate + H2O2 + NH4(+). The catalysed reaction is L-tryptophan + O2 + H2O = indole-3-pyruvate + H2O2 + NH4(+). It carries out the reaction L-methionine + O2 + H2O = 4-methylsulfanyl-2-oxobutanoate + H2O2 + NH4(+). The enzyme catalyses L-tyrosine + O2 + H2O = 3-(4-hydroxyphenyl)pyruvate + H2O2 + NH4(+). Its function is as follows. Catalyzes an oxidative deamination of predominantly hydrophobic and aromatic L-amino acids, thus producing hydrogen peroxide that may contribute to the diverse toxic effects of this enzyme. Is highly active on L-Tyr followed by L-Phe, L-Met, L-Leu, L-Trp, and weakly active on L-Ile, L-Arg, L-Val, L-Lys, and L-Ala. Inhibits ADP- and collagen-induced platelet aggregation. This inhibition is inhibited by catalase, indicating the importance of generated H(2)O(2) for the inhibitory effect. This effect on platelets among snake L-amino-acid oxidases is however controversial, since some of them induce aggregation, whereas the other inhibit agonist-induced aggregation. In vivo, this enzyme induces a rapid, substantial and reversible increase in the paw volume of mice (edema). In addition, myofibrosis, and inflammatory cell infiltration on the paw tissue are also observed. This is L-amino-acid oxidase from Daboia russelii (Russel's viper).